Consider the following 581-residue polypeptide: Interleukin-22 receptor subunit alpha-1 (581 aa).

An N-terminal signal peptide occupies residues 1–15 (MKTLLTILTVGSLAA). Residues 16-230 (HTTVDTSGLL…TLPDRTWAYS (215 aa)) are Extracellular-facing. Fibronectin type-III domains lie at 18–115 (TVDT…RFSS) and 141–221 (PTLT…RVKT). The cysteines at positions 71 and 79 are disulfide-linked. N-linked (GlcNAc...) asparagine glycans are attached at residues asparagine 80 and asparagine 172. Cysteines 128 and 217 form a disulfide. The chain crosses the membrane as a helical span at residues 231–251 (FSGAVLFSMGFLVGLLCYLGY). Topologically, residues 252-581 (KYITKPPVPP…GLALTVQWES (330 aa)) are cytoplasmic. The segment at 343–364 (QQTLSPPSYAPKAVPEVQPPSY) is disordered. Phosphoserine; by GSK3-beta occurs at positions 410 and 414. Residue lysine 449 forms a Glycyl lysine isopeptide (Lys-Gly) (interchain with G-Cter in ubiquitin) linkage.

The protein belongs to the type II cytokine receptor family. As to quaternary structure, heterodimer with IL10RB and with IL20RB. In terms of processing, phosphorylated by GSK3-BETA and MAPK; phosphorylation by GSK3-BETA stabilizes IL22RA1 by preventing its proteasomal degradation. As to expression, expressed in kidney, liver and lung.

It localises to the cell membrane. In terms of biological role, component of the receptor for IL20, IL22 and IL24. Component of IL22 receptor formed by IL22RA1 and IL10RB enabling IL22 signaling via JAK/STAT pathways. IL22 also induces activation of MAPK1/MAPK3 and Akt kinases pathways. Component of one of the receptor for IL20 and IL24 formed by IL22RA1 and IL20RB also signaling through STATs activation. Mediates IL24 antiangiogenic activity as well as IL24 inhibitory effect on endothelial cell tube formation and differentiation. This Mus musculus (Mouse) protein is Interleukin-22 receptor subunit alpha-1 (Il22ra1).